The sequence spans 405 residues: Serine/threonine transporter SstT (405 aa).

9 helical membrane-spanning segments follow: residues 13-33, 43-63, 81-101, 140-160, 191-211, 215-235, 297-317, 338-358, and 362-382; these read GNLV…ATFS, IGNL…FILV, IVVL…ILSF, ALMN…GLAL, FGIF…ALAG, LLAV…PMIV, MAGA…TMGI, ASGV…LFGI, and IAMQ…SAET.

The protein belongs to the dicarboxylate/amino acid:cation symporter (DAACS) (TC 2.A.23) family.

It localises to the cell inner membrane. It catalyses the reaction L-serine(in) + Na(+)(in) = L-serine(out) + Na(+)(out). The enzyme catalyses L-threonine(in) + Na(+)(in) = L-threonine(out) + Na(+)(out). Functionally, involved in the import of serine and threonine into the cell, with the concomitant import of sodium (symport system). This is Serine/threonine transporter SstT from Vibrio cholerae serotype O1 (strain ATCC 39315 / El Tor Inaba N16961).